A 452-amino-acid polypeptide reads, in one-letter code: GTPase Der (452 aa).

2 EngA-type G domains span residues K9–D170 and L185–N362. Residues G15–S22, D62–L66, N124–E127, G191–S198, D238–L242, and N303–D306 contribute to the GTP site. Residues K363–K448 form the KH-like domain.

This sequence belongs to the TRAFAC class TrmE-Era-EngA-EngB-Septin-like GTPase superfamily. EngA (Der) GTPase family. Associates with the 50S ribosomal subunit.

Functionally, GTPase that plays an essential role in the late steps of ribosome biogenesis. The protein is GTPase Der of Rickettsia bellii (strain RML369-C).